Consider the following 207-residue polypeptide: 3-demethoxyubiquinol 3-hydroxylase (207 aa).

Glu-56, Glu-86, His-89, Glu-138, Glu-170, and His-173 together coordinate Fe cation.

It belongs to the COQ7 family. It depends on Fe cation as a cofactor.

It localises to the cell membrane. The catalysed reaction is a 5-methoxy-2-methyl-3-(all-trans-polyprenyl)benzene-1,4-diol + AH2 + O2 = a 3-demethylubiquinol + A + H2O. Its pathway is cofactor biosynthesis; ubiquinone biosynthesis. In terms of biological role, catalyzes the hydroxylation of 2-nonaprenyl-3-methyl-6-methoxy-1,4-benzoquinol during ubiquinone biosynthesis. The protein is 3-demethoxyubiquinol 3-hydroxylase of Cupriavidus necator (strain ATCC 17699 / DSM 428 / KCTC 22496 / NCIMB 10442 / H16 / Stanier 337) (Ralstonia eutropha).